Consider the following 229-residue polypeptide: Wtf element wtf14 (229 aa).

Residues 1 to 26 (MENNHHLAKDSLDELNPKRGKGEHET) are compositionally biased toward basic and acidic residues. Positions 1–27 (MENNHHLAKDSLDELNPKRGKGEHETQ) are disordered. 4 helical membrane-spanning segments follow: residues 71-91 (IPAV…YLVF), 100-120 (VLFG…LLAT), 151-171 (LYAI…LMFF), and 188-208 (VIGV…PGLF).

Belongs to the WTF family.

Its subcellular location is the endoplasmic reticulum membrane. Its function is as follows. May act in meiotic drive. The chain is Wtf element wtf14 from Schizosaccharomyces kambucha (Fission yeast).